A 131-amino-acid polypeptide reads, in one-letter code: Holo-[acyl-carrier-protein] synthase (131 aa).

Mg(2+) contacts are provided by aspartate 8 and glutamate 59.

This sequence belongs to the P-Pant transferase superfamily. AcpS family. The cofactor is Mg(2+).

The protein resides in the cytoplasm. The enzyme catalyses apo-[ACP] + CoA = holo-[ACP] + adenosine 3',5'-bisphosphate + H(+). Functionally, transfers the 4'-phosphopantetheine moiety from coenzyme A to a Ser of acyl-carrier-protein. The chain is Holo-[acyl-carrier-protein] synthase from Rickettsia felis (strain ATCC VR-1525 / URRWXCal2) (Rickettsia azadi).